The chain runs to 305 residues: UDP-3-O-acyl-N-acetylglucosamine deacetylase (305 aa).

The Zn(2+) site is built by histidine 79, histidine 238, and aspartate 242. Histidine 265 functions as the Proton donor in the catalytic mechanism.

This sequence belongs to the LpxC family. It depends on Zn(2+) as a cofactor.

It carries out the reaction a UDP-3-O-[(3R)-3-hydroxyacyl]-N-acetyl-alpha-D-glucosamine + H2O = a UDP-3-O-[(3R)-3-hydroxyacyl]-alpha-D-glucosamine + acetate. It functions in the pathway glycolipid biosynthesis; lipid IV(A) biosynthesis; lipid IV(A) from (3R)-3-hydroxytetradecanoyl-[acyl-carrier-protein] and UDP-N-acetyl-alpha-D-glucosamine: step 2/6. Its function is as follows. Catalyzes the hydrolysis of UDP-3-O-myristoyl-N-acetylglucosamine to form UDP-3-O-myristoylglucosamine and acetate, the committed step in lipid A biosynthesis. This Erwinia tasmaniensis (strain DSM 17950 / CFBP 7177 / CIP 109463 / NCPPB 4357 / Et1/99) protein is UDP-3-O-acyl-N-acetylglucosamine deacetylase.